The primary structure comprises 95 residues: Large ribosomal subunit protein uL23 (95 aa).

This sequence belongs to the universal ribosomal protein uL23 family. In terms of assembly, part of the 50S ribosomal subunit. Contacts protein L29, and trigger factor when it is bound to the ribosome.

One of the early assembly proteins it binds 23S rRNA. One of the proteins that surrounds the polypeptide exit tunnel on the outside of the ribosome. Forms the main docking site for trigger factor binding to the ribosome. This is Large ribosomal subunit protein uL23 from Pelotomaculum thermopropionicum (strain DSM 13744 / JCM 10971 / SI).